A 212-amino-acid polypeptide reads, in one-letter code: Large ribosomal subunit protein uL1 (212 aa).

It belongs to the universal ribosomal protein uL1 family. Part of the 50S ribosomal subunit.

Its function is as follows. Binds directly to 23S rRNA. Probably involved in E site tRNA release. Protein L1 is also a translational repressor protein, it controls the translation of its operon by binding to its mRNA. This Methanothrix thermoacetophila (strain DSM 6194 / JCM 14653 / NBRC 101360 / PT) (Methanosaeta thermophila) protein is Large ribosomal subunit protein uL1.